We begin with the raw amino-acid sequence, 20 residues long: Cicerin (20 aa).

Residues 1–20 are disordered; that stretch reads ARCENFADSYRQPPISSSQT.

In terms of biological role, has antifungal activity against B.cinerea, F.oxysporum and M.arachidicola. Inhibits cell-free translation in rabbit reticulocyte lysate system. This chain is Cicerin, found in Cicer arietinum (Chickpea).